A 310-amino-acid polypeptide reads, in one-letter code: p-hydroxybenzoic acid efflux pump subunit AaeA (310 aa).

A helical transmembrane segment spans residues 12–32 (AITLVLVILAFIAIFRAWVYY).

The protein belongs to the membrane fusion protein (MFP) (TC 8.A.1) family.

It is found in the cell inner membrane. In terms of biological role, forms an efflux pump with AaeB. In Escherichia fergusonii (strain ATCC 35469 / DSM 13698 / CCUG 18766 / IAM 14443 / JCM 21226 / LMG 7866 / NBRC 102419 / NCTC 12128 / CDC 0568-73), this protein is p-hydroxybenzoic acid efflux pump subunit AaeA.